The chain runs to 591 residues: Phosphoglucan phosphatase LSF1, chloroplastic (591 aa).

The N-terminal 61 residues, 1 to 61 (MAFLQQISGL…RRRRVVLRVV (61 aa)), are a transit peptide targeting the chloroplast. Positions 291-453 (RYSKITEQIY…VDDGKHDGTP (163 aa)) constitute a Tyrosine-protein phosphatase domain. C390 functions as the Phosphocysteine intermediate in the catalytic mechanism. 390–396 (CTTGFDR) contacts substrate.

The protein localises to the plastid. It localises to the chloroplast. Functionally, starch granule-associated phosphoglucan phosphatase involved in the control of starch accumulation. Participates in the regulation of the initial steps of starch degradation at the granule surface. May release a different set of phosphate groups from those removed by DSP4. The sequence is that of Phosphoglucan phosphatase LSF1, chloroplastic (LSF1) from Arabidopsis thaliana (Mouse-ear cress).